The sequence spans 312 residues: tRNA uridine(34) hydroxylase (312 aa).

The 96-residue stretch at 130–225 (RGDEVVFFDG…YGEQFGNKGL (96 aa)) folds into the Rhodanese domain. The active-site Cysteine persulfide intermediate is C185.

Belongs to the TrhO family.

It catalyses the reaction uridine(34) in tRNA + AH2 + O2 = 5-hydroxyuridine(34) in tRNA + A + H2O. Functionally, catalyzes oxygen-dependent 5-hydroxyuridine (ho5U) modification at position 34 in tRNAs. The polypeptide is tRNA uridine(34) hydroxylase (Corynebacterium glutamicum (strain ATCC 13032 / DSM 20300 / JCM 1318 / BCRC 11384 / CCUG 27702 / LMG 3730 / NBRC 12168 / NCIMB 10025 / NRRL B-2784 / 534)).